A 491-amino-acid chain; its full sequence is Probable CtpA-like serine protease (491 aa).

The disordered stretch occupies residues 1–22; the sequence is MNDHQKNHATSQDDNTKSTPSK. Residues 8–22 are compositionally biased toward polar residues; it reads HATSQDDNTKSTPSK. The chain crosses the membrane as a helical span at residues 31–51; sequence LWHFILVILGIILLTSIITVV. Residues 119-201 form the PDZ domain; sequence TKQFNEGVSG…TYVTLTIKRG (83 aa). Residues serine 324, aspartate 335, and lysine 349 each act as charge relay system in the active site.

The protein belongs to the peptidase S41A family.

Its subcellular location is the cell membrane. This Staphylococcus epidermidis (strain ATCC 12228 / FDA PCI 1200) protein is Probable CtpA-like serine protease.